Reading from the N-terminus, the 505-residue chain is Alpha-1-syntrophin (505 aa).

Disordered stretches follow at residues 1-24 (MASG…AGAG) and 40-75 (LTVS…AAPP). 2 consecutive PH domains span residues 6–269 (RAPR…AQIN) and 293–401 (DIKQ…DGCH). The span at 9–18 (RTGLLELRAG) shows a compositional bias: low complexity. In terms of domain architecture, PDZ spans 87–170 (RVTVRKADAG…EVVLEVKYMK (84 aa)). Serine 101, serine 184, serine 189, serine 193, and serine 200 each carry phosphoserine. The segment at 183 to 212 (TSVGWDSPPASPLQRQPSSPGPQTRNLSEA) is disordered. Polar residues predominate over residues 195–209 (LQRQPSSPGPQTRNL). The region spanning 449-505 (PFEKLQMSSDDGASLLFLDFGGAEGEIQLDLHSCPKTMVFIIHSFLSAKVTRLGLLA) is the SU domain. The segment at 483-505 (PKTMVFIIHSFLSAKVTRLGLLA) is calmodulin-binding.

It belongs to the syntrophin family. As to quaternary structure, monomer and homodimer. Interacts with the dystrophin related protein DTNA; SGCG of the dystrophin glycoprotein complex; NOS1; GRB2; GA; TGFA; MAPK12 and the sodium channel proteins SCN4A and SCN5A. Interacts with the dystrophin protein DMD in a calmodulin dependent manner and with related protein UTRN; SGCA of the dystrophin glycoprotein complex; F-actin; calmodulin and with the other members of the syntrophin family SNTB1 and SNTB2. Interacts with MYOC; regulates muscle hypertrophy. Interacts with DTNB. Phosphorylated by CaM-kinase II. Phosphorylation may inhibit the interaction with DMD. As to expression, highly expressed in skeletal and cardiac muscle and is also detected in brain.

The protein resides in the cell membrane. The protein localises to the sarcolemma. Its subcellular location is the cell junction. It is found in the cytoplasm. It localises to the cytoskeleton. In terms of biological role, adapter protein that binds to and probably organizes the subcellular localization of a variety of membrane proteins. May link various receptors to the actin cytoskeleton and the extracellular matrix via dystrophin glycoprotein complex. Plays an important role in synapse formation and in the organization of UTRN and acetylcholine receptors at the neuromuscular synapse. Binds to phosphatidylinositol 4,5-bisphosphate. In Oryctolagus cuniculus (Rabbit), this protein is Alpha-1-syntrophin (SNTA1).